Reading from the N-terminus, the 182-residue chain is Ribosome maturation factor RimM (182 aa).

One can recognise a PRC barrel domain in the interval 102–182; the sequence is EEDDYYWKDL…RVEVDWDPGF (81 aa).

It belongs to the RimM family. Binds ribosomal protein uS19.

It is found in the cytoplasm. Its function is as follows. An accessory protein needed during the final step in the assembly of 30S ribosomal subunit, possibly for assembly of the head region. Essential for efficient processing of 16S rRNA. May be needed both before and after RbfA during the maturation of 16S rRNA. It has affinity for free ribosomal 30S subunits but not for 70S ribosomes. In Yersinia pseudotuberculosis serotype IB (strain PB1/+), this protein is Ribosome maturation factor RimM.